The primary structure comprises 302 residues: Oxygen-dependent coproporphyrinogen-III oxidase (302 aa).

Residue Ser-94 participates in substrate binding. A divalent metal cation contacts are provided by His-98 and His-108. His-108 functions as the Proton donor in the catalytic mechanism. Residue Asn-110–Arg-112 coordinates substrate. Positions 147 and 177 each coordinate a divalent metal cation. The important for dimerization stretch occupies residues Tyr-242–Gln-277. Gly-260 to Arg-262 serves as a coordination point for substrate.

Belongs to the aerobic coproporphyrinogen-III oxidase family. As to quaternary structure, homodimer. A divalent metal cation serves as cofactor.

The protein resides in the cytoplasm. The catalysed reaction is coproporphyrinogen III + O2 + 2 H(+) = protoporphyrinogen IX + 2 CO2 + 2 H2O. It functions in the pathway porphyrin-containing compound metabolism; protoporphyrin-IX biosynthesis; protoporphyrinogen-IX from coproporphyrinogen-III (O2 route): step 1/1. Functionally, involved in the heme biosynthesis. Catalyzes the aerobic oxidative decarboxylation of propionate groups of rings A and B of coproporphyrinogen-III to yield the vinyl groups in protoporphyrinogen-IX. The chain is Oxygen-dependent coproporphyrinogen-III oxidase from Shewanella baltica (strain OS155 / ATCC BAA-1091).